The sequence spans 188 residues: MMKSSFLIVPILALTLPFLGAEEQNQEKLTRCESDKRLFNEEKVKYIPIYYMLNRFPSYGFFYQHRSAVSPNRQFIPYPYYARPVVAGPHAQKPQWQDQPNVYPPTVARRPRPHASFIAIPPKKNQDKTAIPAINSIATVEPTIVPATEPIVNAEPIVNAVVTPEASSEFLITSAPETTTVQVTSPVV.

A signal peptide spans 1-21 (MMKSSFLIVPILALTLPFLGA). O-linked (GalNAc...) threonine glycans are attached at residues threonine 143 and threonine 148. The residue at position 163 (threonine 163) is a Phosphothreonine. Serine 167 carries the phosphoserine; alternate modification. Serine 167 carries an O-linked (GalNAc...) serine; alternate glycan. The O-linked (GalNAc...) threonine glycan is linked to threonine 184. Serine 185 is modified (phosphoserine).

This sequence belongs to the kappa-casein family. Mammary gland specific. Secreted in milk.

Its subcellular location is the secreted. Kappa-casein stabilizes micelle formation, preventing casein precipitation in milk. In Sus scrofa (Pig), this protein is Kappa-casein (CSN3).